A 368-amino-acid polypeptide reads, in one-letter code: Cell division protein FtsZ 1 (368 aa).

Residues 52-56 (GGGCN), 139-141 (GTG), Glu-170, Arg-174, and Asp-217 contribute to the GTP site.

It belongs to the FtsZ family. As to quaternary structure, homodimer. Polymerizes to form a dynamic ring structure in a strictly GTP-dependent manner. Interacts directly with several other division proteins.

The protein resides in the cytoplasm. In terms of biological role, essential cell division protein that forms a contractile ring structure (Z ring) at the future cell division site. The regulation of the ring assembly controls the timing and the location of cell division. One of the functions of the FtsZ ring is to recruit other cell division proteins to the septum to produce a new cell wall between the dividing cells. Binds GTP and shows GTPase activity. The polypeptide is Cell division protein FtsZ 1 (Archaeoglobus fulgidus (strain ATCC 49558 / DSM 4304 / JCM 9628 / NBRC 100126 / VC-16)).